A 551-amino-acid chain; its full sequence is MSDIAITISLLALVAVIGLWIGHWKIRGVGLGIGGVLFGGIIVAHFTNQYGLKLDAHTLHFVQEFGLILFVYTIGIQVGPGFFSSLRKSGLKLNAFAILIIVLGSIAVVLVHKIADVPLDIALGIYSGAVTNTPALGAGQQILAELGVPQTTVTMGVSYAMAYPFGICGILLAMWLIRLFFKVKVDDEAARFNAESSQDKESLHNISLKVTNQNLDGLTLIQIPGFSDEEVVCSRLKRDDMEIVPKASTEIRINDILQLVGDDNSLAKMRLIIGYEVDAPTVAYSGEIRSERVVVTNEKVLGKKIRALGIHQKYGVVISRLNRAGIELVPTGNTTLQFGDVLHMVGRSDVLNQAISVIGNAQQKLLQVQMLPVFIGIGLGVLVGSIPFYIPGFPVALKLGLAGGPLVVALILARIGTIGKLYWFMPPSANLALREIGIVLFLAVVGLKSGGSFFDTLVNGSGLEWMGYGIFITFIPLMITGILARLYGKLNYLTICGLLAGSMTDPPALAFANEIKEDNGAAALSYATVYPLVMFLRIMSPQLLAVLLWAA.

5 helical membrane passes run 4–24 (IAIT…IGHW), 28–48 (GVGL…HFTN), 65–85 (FGLI…FFSS), 95–115 (AFAI…HKIA), and 157–177 (VSYA…MWLI). RCK C-terminal domains follow at residues 191–275 (RFNA…IIGY) and 277–360 (VDAP…VIGN). A run of 6 helical transmembrane segments spans residues 370 to 390 (MLPV…PFYI), 402 to 424 (AGGP…LYWF), 438 to 458 (IVLF…DTLV), 463 to 483 (LEWM…TGIL), 492 to 512 (YLTI…LAFA), and 529 to 549 (VYPL…VLLW).

Belongs to the AAE transporter (TC 2.A.81) family. YidE subfamily.

Its subcellular location is the cell membrane. The sequence is that of Putative transport protein NTHI0043 from Haemophilus influenzae (strain 86-028NP).